The chain runs to 481 residues: Phosphoenolpyruvate phosphatase (481 aa).

Positions 1–36 (MPIYTSRSCFYLLLFHIILLCSVDKTLCRQTSSFVR) are cleaved as a signal peptide. Residue N109 is glycosylated (N-linked (GlcNAc...) asparagine). Fe cation-binding residues include D168, D195, and Y198. D195 is a binding site for Zn(2+). N-linked (GlcNAc...) asparagine glycosylation is present at N206. 2 residues coordinate Zn(2+): N232 and H317. Substrate is bound at residue N232. The Proton donor role is filled by H327. H354 is a binding site for Zn(2+). 354-356 (HVH) lines the substrate pocket. H356 lines the Fe cation pocket. Residues N370 and N427 are each glycosylated (N-linked (GlcNAc...) asparagine).

Belongs to the metallophosphoesterase superfamily. Purple acid phosphatase family.

It is found in the vacuole lumen. The enzyme catalyses phosphoenolpyruvate + H2O = pyruvate + phosphate. Functionally, phosphoenolpyruvate phosphatase that probably operates in the vacuole to release phosphate from phosphoenolpyruvate (PEP) under phosphorus starvation. The protein is Phosphoenolpyruvate phosphatase (ACPEPP) of Allium cepa (Onion).